The chain runs to 282 residues: Probable aquaporin PIP2-6 (282 aa).

Helical transmembrane passes span 39–59 (ALIA…ATVI) and 76–96 (LGIA…TAGI). The short motif at 102-104 (NPA) is the NPA 1 element. The next 3 helical transmembrane spans lie at 121 to 141 (VMYI…VKGI), 163 to 183 (GTAL…VFSA), and 197 to 217 (VLAP…TIPI). The NPA 2 motif lies at 223-225 (NPA). Residues 245 to 265 (IFWAGPFIGALAAAAYHQYIL) traverse the membrane as a helical segment.

It belongs to the MIP/aquaporin (TC 1.A.8) family. PIP (TC 1.A.8.11) subfamily. In terms of tissue distribution, expressed in roots and leaves.

The protein localises to the cell membrane. Functionally, aquaporins facilitate the transport of water and small neutral solutes across cell membranes. This Oryza sativa subsp. japonica (Rice) protein is Probable aquaporin PIP2-6 (PIP2-6).